Consider the following 235-residue polypeptide: MVHIISKKSVSFIGQSLAAKIDEQLFSKYGFKVEQLMELAGLASAQAIAAHYPKSKVAVLCGPGNNGGDGFVCARHLQQFGFNPSIVYPKESKNELMKSLVIQCETSSIPVQPNLPTDLQSFPLIVDALFGFSFKPPAREPFTEILKAVRASGIHVFSIDIPSGWDVENGAPSEASEDIIHPHAVISLTLPKMCMKSWTGPHFLGGRFVPRGLVEEHGLQMPVYPGFEQIVKVED.

A YjeF N-terminal domain is found at 18–221; sequence AAKIDEQLFS…GLVEEHGLQM (204 aa). 65-69 is a (6S)-NADPHX binding site; it reads NNGGD. 2 residues coordinate K(+): N66 and D127. (6S)-NADPHX-binding positions include 131-137 and D160; that span reads GFSFKPP. S163 serves as a coordination point for K(+).

Belongs to the NnrE/AIBP family. It depends on K(+) as a cofactor.

It catalyses the reaction (6R)-NADHX = (6S)-NADHX. It carries out the reaction (6R)-NADPHX = (6S)-NADPHX. Functionally, catalyzes the epimerization of the S- and R-forms of NAD(P)HX, a damaged form of NAD(P)H that is a result of enzymatic or heat-dependent hydration. This is a prerequisite for the S-specific NAD(P)H-hydrate dehydratase to allow the repair of both epimers of NAD(P)HX. This chain is NAD(P)H-hydrate epimerase, found in Caenorhabditis briggsae.